A 188-amino-acid chain; its full sequence is V-type ATP synthase subunit E (188 aa).

This sequence belongs to the V-ATPase E subunit family.

In terms of biological role, produces ATP from ADP in the presence of a proton gradient across the membrane. The sequence is that of V-type ATP synthase subunit E (atpE) from Thermus thermophilus (strain ATCC 27634 / DSM 579 / HB8).